The sequence spans 177 residues: Large ribosomal subunit protein uL16 (177 aa).

The protein belongs to the universal ribosomal protein uL16 family. Part of the 50S ribosomal subunit. Weakly binds 5S rRNA. Probably binds the A and P site tRNAs.

In terms of biological role, this is 1 of 5 proteins that mediate the attachment of the 5S rRNA onto the large ribosomal subunit, stabilizing the orientation of adjacent RNA domains. Modeling places the A and P site tRNAs in close proximity to this protein. The chain is Large ribosomal subunit protein uL16 from Haloarcula marismortui (strain ATCC 43049 / DSM 3752 / JCM 8966 / VKM B-1809) (Halobacterium marismortui).